The chain runs to 358 residues: tRNA-specific 2-thiouridylase MnmA (358 aa).

Residues 6–13 (LVSGGVDS) and isoleucine 32 contribute to the ATP site. An interaction with target base in tRNA region spans residues 93–95 (NPD). Cysteine 98 (nucleophile) is an active-site residue. A disulfide bridge links cysteine 98 with cysteine 193. Glycine 121 is an ATP binding site. The segment at 143 to 145 (KDQ) is interaction with tRNA. The active-site Cysteine persulfide intermediate is cysteine 193.

This sequence belongs to the MnmA/TRMU family.

Its subcellular location is the cytoplasm. It catalyses the reaction S-sulfanyl-L-cysteinyl-[protein] + uridine(34) in tRNA + AH2 + ATP = 2-thiouridine(34) in tRNA + L-cysteinyl-[protein] + A + AMP + diphosphate + H(+). Functionally, catalyzes the 2-thiolation of uridine at the wobble position (U34) of tRNA, leading to the formation of s(2)U34. This chain is tRNA-specific 2-thiouridylase MnmA, found in Parabacteroides distasonis (strain ATCC 8503 / DSM 20701 / CIP 104284 / JCM 5825 / NCTC 11152).